The primary structure comprises 483 residues: Cysteine--tRNA ligase (483 aa).

C27 lines the Zn(2+) pocket. Residues 29-39 carry the 'HIGH' region motif; the sequence is ITAYDYCHIGH. 3 residues coordinate Zn(2+): C208, H231, and E235. The 'KMSKS' region motif lies at 263–267; it reads KMSKS. ATP is bound at residue K266.

Belongs to the class-I aminoacyl-tRNA synthetase family. As to quaternary structure, monomer. The cofactor is Zn(2+).

It localises to the cytoplasm. It catalyses the reaction tRNA(Cys) + L-cysteine + ATP = L-cysteinyl-tRNA(Cys) + AMP + diphosphate. The polypeptide is Cysteine--tRNA ligase (Desulfovibrio desulfuricans (strain ATCC 27774 / DSM 6949 / MB)).